Consider the following 904-residue polypeptide: Protein translocase subunit SecA (904 aa).

Residues Q87, 105 to 109, and D512 contribute to the ATP site; that span reads GEGKT. The interval 851–904 is disordered; the sequence is LAKQQQLSHESDNSALMSQEEANVAASLERKVGRNDPCPCGSGKKYKQCHGRLQ. The span at 853 to 871 shows a compositional bias: polar residues; that stretch reads KQQQLSHESDNSALMSQEE. 4 residues coordinate Zn(2+): C888, C890, C899, and H900. Positions 894–904 are enriched in basic residues; the sequence is KKYKQCHGRLQ.

It belongs to the SecA family. Monomer and homodimer. Part of the essential Sec protein translocation apparatus which comprises SecA, SecYEG and auxiliary proteins SecDF-YajC and YidC. Zn(2+) serves as cofactor.

Its subcellular location is the cell inner membrane. It is found in the cytoplasm. It carries out the reaction ATP + H2O + cellular proteinSide 1 = ADP + phosphate + cellular proteinSide 2.. Functionally, part of the Sec protein translocase complex. Interacts with the SecYEG preprotein conducting channel. Has a central role in coupling the hydrolysis of ATP to the transfer of proteins into and across the cell membrane, serving both as a receptor for the preprotein-SecB complex and as an ATP-driven molecular motor driving the stepwise translocation of polypeptide chains across the membrane. The sequence is that of Protein translocase subunit SecA from Yersinia enterocolitica serotype O:8 / biotype 1B (strain NCTC 13174 / 8081).